Reading from the N-terminus, the 336-residue chain is MEVHEEQVSAPVTGDATAKYLLQYILSARGICHENALILALMRLETDASTLNTEWSIQQWVDKLNDYINAINVKLNLLGYKIIRINHGIGRNAVTLKAKQNFESFEDNTAIRAHNNDYAVLQSIVLPESNRFFVYVNLASTEETKLATRFNQNEIEFMKWAIEQFMISGETIVEGPALETSIIVKEVNRILVAATGDSNLAKWRKFSTFTVGSTNLFQFQELTATDIEDLLLRLCELKWFYRTQEGKFGIDLRCIAELEEYLTSMYNLNTCQNCHKLAIQGVRCGNESCREENEETGENSLSQIWHVDCFKHYITHVSKNCDRCGSSLITEGVYVI.

The RING-type; atypical zinc-finger motif lies at 268-327 (LNTCQNCHKLAIQGVRCGNESCREENEETGENSLSQIWHVDCFKHYITHVSKNCDRCGSS).

This sequence belongs to the NSE1 family. As to quaternary structure, component of the Smc5-Smc6 complex which consists of KRE29, MMS21, NSE1, NSE3, NSE4, NSE5, SMC5 and SMC6. Interacts with SMC5 and SMC6. Interacts with NSE3.

The protein resides in the nucleus. The enzyme catalyses S-ubiquitinyl-[E2 ubiquitin-conjugating enzyme]-L-cysteine + [acceptor protein]-L-lysine = [E2 ubiquitin-conjugating enzyme]-L-cysteine + N(6)-ubiquitinyl-[acceptor protein]-L-lysine.. Functionally, acts in a DNA repair pathway for removal of UV-induced DNA damage that is distinct from classical nucleotide excision repair and in repair of ionizing radiation damage. Functions in homologous recombination repair of DNA double strand breaks and in recovery of stalled replication forks. The polypeptide is Non-structural maintenance of chromosomes element 1 (NSE1) (Saccharomyces cerevisiae (strain ATCC 204508 / S288c) (Baker's yeast)).